Reading from the N-terminus, the 191-residue chain is UPF0312 protein Pmen_0419 (191 aa).

The signal sequence occupies residues 1-22; that stretch reads MLKNALAALVLGSALIGGQAMA.

Belongs to the UPF0312 family. Type 1 subfamily.

The protein resides in the periplasm. This chain is UPF0312 protein Pmen_0419, found in Ectopseudomonas mendocina (strain ymp) (Pseudomonas mendocina).